The chain runs to 534 residues: MLQVQAVHRDEKQAVKLKKTTYLPYLFNLVLPKMFYPNRIVVARLYTDVHEHDKQAAEYFEGFQTPCFEVPASLFPGEAPLDKIVFMPTVMLPMGFEAGGVFGPGVLPRRSYPIDLMASGHKGQTPPLFVGLRSLYVQLPSGIESFLDTVVDNAAGQDALVYGSCQPGNHPSKGEQSKELMHSNDCSLSIAYNLPAPPTPPSPYPFPPLPVQYNIYTPDLSNVHMLMLQQRNPTVALLSTVNHPHVPAVAFATMGDEECPKFELPSDIFPICEGVNRPIFLPRRFLPKGFDAGCVFKPASLPKLWFVKHIGGFNRPQPQHNNAITPPLFVGKISLVVGAHHLAKELQRQGEQKAQSEGAEGGSLKVVEPNGGFIPVTQGFMVMETEQQTPPRGAYSLESYQEASEKGCVVRAIKDEAIEATDTLLSKLASKPEDMQKKYLSCFKVDSDIDLMAEAMADMGTAEMSLLAKRETLPGVDGPRALDQLRQVVEDRSQIRSHTDQLIQDHIYRMDRNRMLALRQPFAPWFGCGTIERK.

Belongs to the DM7 family.

This chain is DM7 family protein GE17491, found in Drosophila yakuba (Fruit fly).